Consider the following 421-residue polypeptide: MTESVLDYMTRLGRAAREASRVIGRASTAQKNRALQATAAALDEARAELSAANALDLANGQANGLEPAMLERLALTPARIDSMIVGLRQVAGLADPVGAIRDMSYRPSGIQVGKMRVPLGVVGIIYESRPNVTIDAASLCLKSGNATILRGGSEAIHSNRAIAACIERGLAEARLPAAVVQVVETTDRAAVGALITMPEYVDVIVPRGGKGLIERVSRDARVPVIKHLDGICHVYVSAHADLAKAQKIAFNAKTYRYGICGAMETLLVDQTIAADFLPAMAAQFREKGVELRGCERTRDLIDVIPATEDDWHTEYLAAILSIRVVSGLDEAIEHINHYGSHHSDAIVSDHQSQIRRFMAEVDSSSVMVNAPTSFADGFEYGLGAEIGISTDKLHARGPVGLEGLTCEKYIVIGDGQLRGQA.

The protein belongs to the gamma-glutamyl phosphate reductase family.

The protein resides in the cytoplasm. The enzyme catalyses L-glutamate 5-semialdehyde + phosphate + NADP(+) = L-glutamyl 5-phosphate + NADPH + H(+). It participates in amino-acid biosynthesis; L-proline biosynthesis; L-glutamate 5-semialdehyde from L-glutamate: step 2/2. In terms of biological role, catalyzes the NADPH-dependent reduction of L-glutamate 5-phosphate into L-glutamate 5-semialdehyde and phosphate. The product spontaneously undergoes cyclization to form 1-pyrroline-5-carboxylate. The sequence is that of Gamma-glutamyl phosphate reductase from Pseudomonas savastanoi pv. phaseolicola (strain 1448A / Race 6) (Pseudomonas syringae pv. phaseolicola (strain 1448A / Race 6)).